The sequence spans 299 residues: Prolyl 4-hydroxylase 2 (299 aa).

Residues Met1 to Arg5 are Cytoplasmic-facing. A helical; Signal-anchor for type II membrane protein membrane pass occupies residues Leu6–Ile26. The Lumenal segment spans residues Ser27 to Cys299. Positions Asn121 to Val246 constitute a Fe2OG dioxygenase domain. Residues His139 and Asp141 each contribute to the Fe cation site. The N-linked (GlcNAc...) asparagine glycan is linked to Asn165. His227 provides a ligand contact to Fe cation. Lys237 is a 2-oxoglutarate binding site. N-linked (GlcNAc...) asparagine glycosylation is found at Asn258 and Asn263. One can recognise a ShKT domain in the interval Cys259–Cys299. Cystine bridges form between Cys259/Cys299, Cys266/Cys292, and Cys275/Cys296.

This sequence belongs to the P4HA family. The cofactor is Fe(2+). Requires L-ascorbate as cofactor. In terms of tissue distribution, expressed in epidermal root hair cells (trichoblasts).

The protein resides in the endoplasmic reticulum membrane. It is found in the golgi apparatus membrane. The enzyme catalyses L-prolyl-[collagen] + 2-oxoglutarate + O2 = trans-4-hydroxy-L-prolyl-[collagen] + succinate + CO2. Functionally, catalyzes the post-translational formation of 4-hydroxyproline in -Xaa-Pro-Gly- sequences in proline-rich peptide sequences of plant glycoproteins and other proteins. Hydroxyprolines are important constituent of many plant cell wall glycoproteins such as extensins, hydroxyproline-rich glycoproteins, lectins and arabinogalactan proteins. Possesses high affinity for leucine-rich repeat and proline-rich extensins of root cell walls that are essential for root hair development. Hydroxyprolines define the subsequent O-glycosylation sites by arabinosyltransferases which elongate the O-arabinosides on extensins. Has low affinity for the substrates tested in vitro. This Arabidopsis thaliana (Mouse-ear cress) protein is Prolyl 4-hydroxylase 2.